A 218-amino-acid chain; its full sequence is NAD(P)H-quinone oxidoreductase subunit I (218 aa).

2 consecutive 4Fe-4S ferredoxin-type domains span residues 55-84 (GRIHYEFDKCIACEVCVRVCPINLPVVDWV) and 95-124 (RNYSIDFGACIFCGNCVEYCPTNCLSMTEE). Cys64, Cys67, Cys70, Cys74, Cys104, Cys107, Cys110, and Cys114 together coordinate [4Fe-4S] cluster. The interval 169–218 (MDPHELPANQQRAGKLPSQIIKELQAEKSEEKGNNNSSDIVPNKLNSTNK) is disordered. The segment covering 192 to 201 (LQAEKSEEKG) has biased composition (basic and acidic residues). A compositionally biased stretch (polar residues) spans 202–218 (NNNSSDIVPNKLNSTNK).

It belongs to the complex I 23 kDa subunit family. As to quaternary structure, NDH-1 is composed of at least 11 different subunits. The cofactor is [4Fe-4S] cluster.

It is found in the cellular thylakoid membrane. The enzyme catalyses a plastoquinone + NADH + (n+1) H(+)(in) = a plastoquinol + NAD(+) + n H(+)(out). It carries out the reaction a plastoquinone + NADPH + (n+1) H(+)(in) = a plastoquinol + NADP(+) + n H(+)(out). Functionally, NDH-1 shuttles electrons from an unknown electron donor, via FMN and iron-sulfur (Fe-S) centers, to quinones in the respiratory and/or the photosynthetic chain. The immediate electron acceptor for the enzyme in this species is believed to be plastoquinone. Couples the redox reaction to proton translocation, and thus conserves the redox energy in a proton gradient. The chain is NAD(P)H-quinone oxidoreductase subunit I from Prochlorococcus marinus (strain NATL1A).